The primary structure comprises 129 residues: Follitropin subunit beta (129 aa).

A signal peptide spans 1-19; the sequence is MKSVQFCFLFCCWRAICCR. Cystine bridges form between Cys21-Cys69, Cys35-Cys84, Cys38-Cys122, Cys46-Cys100, Cys50-Cys102, and Cys105-Cys112. 2 N-linked (GlcNAc...) asparagine glycosylation sites follow: Asn25 and Asn42.

It belongs to the glycoprotein hormones subunit beta family. In terms of assembly, heterodimer. The active follitropin is a heterodimer composed of an alpha chain/CGA shared with other hormones and a unique beta chain/FSHB shown here.

The protein resides in the secreted. In terms of biological role, together with the alpha chain CGA constitutes follitropin, the follicle-stimulating hormone, and provides its biological specificity to the hormone heterodimer. Binds FSHR, a G protein-coupled receptor, on target cells to activate downstream signaling pathways. Follitropin is involved in follicle development and spermatogenesis in reproductive organs. This Ovis aries (Sheep) protein is Follitropin subunit beta (FSHB).